Reading from the N-terminus, the 286-residue chain is Protease HtpX homolog (286 aa).

The next 2 helical transmembrane spans lie at 6–26 and 28–48; these read TCFL…YVGG and QGMI…YFFS. Zn(2+) is bound at residue His-130. Glu-131 is an active-site residue. His-134 contacts Zn(2+). 2 consecutive transmembrane segments (helical) span residues 140 to 160 and 178 to 198; these read ILTG…ANFA and AIML…QMAI. Glu-203 lines the Zn(2+) pocket.

The protein belongs to the peptidase M48B family. The cofactor is Zn(2+).

It localises to the cell inner membrane. This Campylobacter curvus (strain 525.92) protein is Protease HtpX homolog.